Reading from the N-terminus, the 348-residue chain is Cylicin-2 (348 aa).

The tract at residues 25–347 (KKSWNQQHFA…DEKKDAKKKG (323 aa)) is 31 X 3 AA repeats of K-K-X. 2 disordered regions span residues 35-59 (LLFP…DNTV) and 101-348 (PTRT…KKGK). Basic and acidic residues-rich tracts occupy residues 103–159 (RTVE…DAKK), 166–217 (KDAE…EKDS), 238–267 (KADE…AKEI), and 276–342 (KPSS…EKKD). A run of 3 repeats spans residues 157-184 (AKKD…EKGG), 185-212 (AKKD…EKGG), and 213-240 (TEKD…VKAD). Residues 157-240 (AKKDSKKGKK…AIELQAVKAD (84 aa)) form a 3 X approximate tandem repeats region.

In terms of tissue distribution, testis.

The protein resides in the cytoplasm. It localises to the cytoskeleton. The protein localises to the perinuclear theca. It is found in the calyx. Plays a role in the establishment of normal sperm morphology during spermatogenesis. It is required for acrosome attachment to the nuclear envelope, and proper manchette elongation and disassembly. This chain is Cylicin-2 (CYLC2), found in Homo sapiens (Human).